The following is a 205-amino-acid chain: Regulatory protein RecX (205 aa).

This sequence belongs to the RecX family.

It is found in the cytoplasm. Functionally, modulates RecA activity. In Finegoldia magna (strain ATCC 29328 / DSM 20472 / WAL 2508) (Peptostreptococcus magnus), this protein is Regulatory protein RecX.